A 1055-amino-acid chain; its full sequence is Protein SUPPRESSOR OF QUENCHING 1, chloroplastic (1055 aa).

The transit peptide at Met-1–Ser-56 directs the protein to the chloroplast. Val-57 carries the post-translational modification N-acetylvaline. At Ala-59–Arg-327 the chain is on the stromal side. Catalysis depends on Asp-80, which acts as the Nucleophile. Mg(2+) is bound by residues Asp-80 and Asp-82. Residue Asp-80 coordinates substrate. Catalysis depends on Asp-82, which acts as the Proton donor. Residues Glu-89, Thr-118 to Lys-122, Ala-141 to Arg-144, and Ser-183 to Lys-189 contribute to the substrate site. Asp-242 provides a ligand contact to Mg(2+). A helical membrane pass occupies residues Tyr-328–Trp-345. At Lys-346–Arg-1055 the chain is on the lumenal side. Residues Ala-359 to Thr-536 enclose the Thioredoxin domain. Cys-431 and Cys-434 are joined by a disulfide. NHL repeat units follow at residues Pro-565 to Glu-597, Gly-611 to Leu-647, Gly-673 to Leu-712, Leu-802 to Val-832, and Gly-854 to Asn-887.

It in the N-terminal section; belongs to the HAD-like hydrolase superfamily. The protein in the C-terminal section; belongs to the thioredoxin family. Mg(2+) serves as cofactor.

It localises to the plastid. The protein resides in the chloroplast thylakoid membrane. In terms of biological role, required to maintain light harvesting efficiency, especially during nonphotochemical quenching (NPQ) recovery, via the regulation of chlorophyll excited-state lifetime probably by preventing the formation of a slowly reversible form of antenna quenching. The polypeptide is Protein SUPPRESSOR OF QUENCHING 1, chloroplastic (Arabidopsis thaliana (Mouse-ear cress)).